The following is a 479-amino-acid chain: Adenosylhomocysteinase (479 aa).

Thr56, Asp133, and Glu199 together coordinate substrate. 200–202 contacts NAD(+); that stretch reads TTT. Substrate is bound by residues Lys229 and Asp233. NAD(+)-binding positions include Asn234, 263–268, Glu286, Asn321, 342–344, and Asn390; these read GYGDVG and IGH.

Belongs to the adenosylhomocysteinase family. As to quaternary structure, homotetramer. Requires NAD(+) as cofactor.

The catalysed reaction is S-adenosyl-L-homocysteine + H2O = L-homocysteine + adenosine. The protein operates within amino-acid biosynthesis; L-homocysteine biosynthesis; L-homocysteine from S-adenosyl-L-homocysteine: step 1/1. Functionally, adenosylhomocysteine is a competitive inhibitor of S-adenosyl-L-methionine-dependent methyl transferase reactions; therefore adenosylhomocysteinase may play a key role in the control of methylations via regulation of the intracellular concentration of adenosylhomocysteine. This is Adenosylhomocysteinase from Plasmodium yoelii yoelii.